A 309-amino-acid chain; its full sequence is Metal ABC transporter substrate-binding lipoprotein FimA (309 aa).

Residues 1 to 20 (MKKIASVLALFVALLFGLLA) form the signal peptide. Cys21 carries N-palmitoyl cysteine lipidation. Cys21 is lipidated: S-diacylglycerol cysteine. A divalent metal cation-binding residues include His67, His139, Glu205, and Asp280.

This sequence belongs to the bacterial solute-binding protein 9 family. Lipoprotein receptor antigen (Lrai) subfamily.

It is found in the cell membrane. In terms of biological role, part of an ATP-binding cassette (ABC) transport system involved in metal import. Binds a metal with high affinity and specificity and delivers it to the membrane permease for translocation into the cytoplasm. Also acts as an adhesin which is involved on adherence to extracellular matrix. It is an important factor in pathogenesis and infection. May contribute to the formation and accumulation of dental plaque. The protein is Metal ABC transporter substrate-binding lipoprotein FimA (fimA) of Streptococcus parasanguinis.